The primary structure comprises 282 residues: 4-hydroxybenzoate octaprenyltransferase (282 aa).

9 consecutive transmembrane segments (helical) span residues 17–37 (IGILLLWYPTAWALWMANQGF), 40–60 (IDLLMIFLFGTVFMRSAGCVI), 90–110 (AFILLFILLCASLLLLLKLPI), 113–133 (FYFAVISVLITFLYPFCKRFL), 135–155 (APQLILGLAFSMGIPMAFIAS), 163–183 (FIVLFLINFSWIIAYDTMYAM), 207–227 (LIIALLLIFLHSLWLVWAINK), 231–251 (WFFYLLWCTAAGILTYQLKLI), and 262–282 (AFLVSGYYGLVMWFAVGLALI).

This sequence belongs to the UbiA prenyltransferase family. Requires Mg(2+) as cofactor.

The protein resides in the cell inner membrane. The enzyme catalyses all-trans-octaprenyl diphosphate + 4-hydroxybenzoate = 4-hydroxy-3-(all-trans-octaprenyl)benzoate + diphosphate. It participates in cofactor biosynthesis; ubiquinone biosynthesis. In terms of biological role, catalyzes the prenylation of para-hydroxybenzoate (PHB) with an all-trans polyprenyl group. Mediates the second step in the final reaction sequence of ubiquinone-8 (UQ-8) biosynthesis, which is the condensation of the polyisoprenoid side chain with PHB, generating the first membrane-bound Q intermediate 3-octaprenyl-4-hydroxybenzoate. In Legionella pneumophila (strain Corby), this protein is 4-hydroxybenzoate octaprenyltransferase.